Reading from the N-terminus, the 503-residue chain is Legumin J (503 aa).

Residues 1 to 22 form the signal peptide; it reads MSKPFLSLLSLSLLLFASACLA. Cystine bridges form between C33–C66 and C109–C329. The 220-residue stretch at 38–257 folds into the Cupin type-1 1 domain; the sequence is INALEPDHRV…TFNTEEDTAK (220 aa). Disordered regions lie at residues 111–140, 185–235, and 253–323; these read ETYE…RRFR, FYLG…EGNS, and EDTA…RKNG. Residues 118–129 show a composition bias toward low complexity; sequence SSQSRQESRQQQ. 2 stretches are compositionally biased toward basic and acidic residues: residues 254-268 and 282-300; these read DTAK…ERSQ and KGKE…HREE. A compositionally biased stretch (acidic residues) spans 301–312; it reads KEEEEEEEEDEE. Over residues 313–323 the composition is skewed to basic and acidic residues; the sequence is EKQRSEERKNG. A Cupin type-1 2 domain is found at 335-482; the sequence is ENIADAARAD…AFGLRQRQVT (148 aa).

Belongs to the 11S seed storage protein (globulins) family. In terms of assembly, hexamer; each subunit is composed of an acidic and a basic chain derived from a single precursor and linked by a disulfide bond.

In terms of biological role, this protein found in the seeds of many leguminous and non-leguminous plants is the source of sulfur-containing amino acids in seed meals. This Pisum sativum (Garden pea) protein is Legumin J (LEGJ).